A 142-amino-acid polypeptide reads, in one-letter code: MVLSANDKTNVKTVFTKITGHAEDYGAETLERMFITYPPTKTYFPHFDLHHGSAQIKAHGKKVVGALIEAVNHIDDIAGALSKLSDLHAQKLRVDPVNFKLLGQCFLVVVAIHHPSVLTPEVHASLDKFLCAVGNVLTAKYR.

The Globin domain occupies 2 to 142; it reads VLSANDKTNV…VGNVLTAKYR (141 aa). His59 contacts O2. Position 88 (His88) interacts with heme b.

It belongs to the globin family. Heterotetramer of two alpha chains and two beta chains. In terms of tissue distribution, red blood cells.

Functionally, involved in oxygen transport from the lung to the various peripheral tissues. This is Hemoglobin subunit alpha-A (HBAA) from Aegypius monachus (Cinereous vulture).